The primary structure comprises 2201 residues: Tenascin (2201 aa).

The N-terminal stretch at 1 to 22 (MGAMTQLLAGVFLAFLALATEG) is a signal peptide. Asn-38 carries N-linked (GlcNAc...) asparagine glycosylation. Phosphoserine occurs at positions 65 and 70. At Ser-72 the chain carries Phosphoserine; by FAM20C. Ser-72 is a glycosylation site (O-linked (Xyl...) (chondroitin sulfate) serine). Residues 118-145 (DVKELLSRLEELENLVSSLREQCTAGAG) are a coiled coil. Asn-166 and Asn-184 each carry an N-linked (GlcNAc...) asparagine glycan. One can recognise an EGF-like 1; incomplete domain in the interval 174 to 186 (CVCEPGWKGPNCS). EGF-like domains follow at residues 186 to 217 (SEPECPGNCHLRGRCIDGQCICDDGFTGEDCS), 217 to 248 (SQLACPSDCNDQGKCVNGVCICFEGYAGADCS), 248 to 280 (SREICPVPCSEEHGTCVDGLCVCHDGFAGDDCN), 280 to 311 (NKPLCLNNCYNRGRCVENECVCDEGFTGEDCS), 311 to 342 (SELICPNDCFDRGRCINGTCYCEEGFTGEDCG), 342 to 373 (GKPTCPHACHTQGRCEEGQCVCDEGFAGVDCS), 373 to 404 (SEKRCPADCHNRGRCVDGRCECDDGFTGADCG), 404 to 435 (GELKCPNGCSGHGRCVNGQCVCDEGYTGEDCS), 435 to 466 (SQLRCPNDCHSRGRCVEGKCVCEQGFKGYDCS), 466 to 497 (SDMSCPNDCHQHGRCVNGMCVCDDGYTGEDCR), 497 to 528 (RDRQCPRDCSNRGLCVDGQCVCEDGFTGPDCA), 528 to 559 (AELSCPNDCHGQGRCVNGQCVCHEGFMGKDCK), 559 to 590 (KEQRCPSDCHGQGRCVDGQCICHEGFTGLDCG), and 590 to 621 (GQHSCPSDCNNLGQCVSGRCICNEGYSGEDCS). Cystine bridges form between Cys-190/Cys-200, Cys-194/Cys-205, Cys-207/Cys-216, Cys-221/Cys-231, Cys-225/Cys-236, Cys-238/Cys-247, Cys-252/Cys-263, Cys-256/Cys-268, Cys-270/Cys-279, Cys-284/Cys-294, Cys-288/Cys-299, Cys-301/Cys-310, Cys-315/Cys-325, Cys-319/Cys-330, Cys-332/Cys-341, Cys-346/Cys-356, Cys-350/Cys-361, Cys-363/Cys-372, Cys-377/Cys-387, Cys-381/Cys-392, Cys-394/Cys-403, Cys-408/Cys-418, Cys-412/Cys-423, Cys-425/Cys-434, Cys-439/Cys-449, Cys-443/Cys-454, Cys-456/Cys-465, Cys-470/Cys-480, Cys-474/Cys-485, Cys-487/Cys-496, Cys-501/Cys-511, Cys-505/Cys-516, Cys-518/Cys-527, Cys-532/Cys-542, Cys-536/Cys-547, Cys-549/Cys-558, Cys-563/Cys-573, Cys-567/Cys-578, Cys-580/Cys-589, Cys-594/Cys-604, Cys-598/Cys-609, and Cys-611/Cys-620. N-linked (GlcNAc...) asparagine glycosylation occurs at Asn-327. Fibronectin type-III domains are found at residues 625-715 (PPKD…LPAP), 716-804 (EGLK…TRLD), 805-894 (APSQ…TGLD), 895-990 (APRN…TPKD), 991-1075 (LQVS…EQAP), 1076-1165 (ELEN…TGET), 1167-1256 (NLGE…TEEV), 1258-1350 (DMGN…LPQL), 1351-1439 (GDLA…AKEP), 1440-1531 (EIGN…ALPL), 1533-1621 (ENLT…EAEP), 1622-1711 (EVDN…TAMG), 1712-1801 (SPKE…ALDG), 1802-1888 (PSGL…TDLD), and 1889-1977 (SPRD…IGLL). Asn-788 is a glycosylation site (N-linked (GlcNAc...) asparagine). Thr-905 carries the post-translational modification Phosphothreonine. N-linked (GlcNAc...) asparagine glycans are attached at residues Asn-1018, Asn-1034, Asn-1079, Asn-1093, Asn-1119, Asn-1184, Asn-1210, Asn-1261, Asn-1275, Asn-1301, Asn-1366, Asn-1392, Asn-1445, Asn-1455, Asn-1485, and Asn-1534. An N-linked (GlcNAc...) asparagine glycan is attached at Asn-1809. The region spanning 1975–2190 (GLLYPFPKDC…FAEMKLRPSN (216 aa)) is the Fibrinogen C-terminal domain. The N-linked (GlcNAc...) asparagine glycan is linked to Asn-2162.

The protein belongs to the tenascin family. In terms of assembly, homohexamer; disulfide-linked. A homotrimer may be formed in the triple coiled-coil region and may be stabilized by disulfide rings at both ends. Two of such half-hexabrachions may be disulfide linked within the central globule. Interacts with CSPG4. Interacts (via the 3rd fibronectin type-III domain) with integrin ITGA9:ITGB1. Detected in fibroblasts (at protein level).

Its subcellular location is the secreted. It is found in the extracellular space. It localises to the extracellular matrix. Extracellular matrix protein implicated in guidance of migrating neurons as well as axons during development, synaptic plasticity as well as neuronal regeneration. Promotes neurite outgrowth from cortical neurons grown on a monolayer of astrocytes. Ligand for integrins alpha-8/beta-1, alpha-9/beta-1, alpha-V/beta-3 and alpha-V/beta-6. In tumors, stimulates angiogenesis by elongation, migration and sprouting of endothelial cells. In Homo sapiens (Human), this protein is Tenascin (TNC).